Consider the following 218-residue polypeptide: UPF0502 protein VS_II0353 (218 aa).

The protein belongs to the UPF0502 family.

The polypeptide is UPF0502 protein VS_II0353 (Vibrio atlanticus (strain LGP32) (Vibrio splendidus (strain Mel32))).